We begin with the raw amino-acid sequence, 496 residues long: Gamma-aminobutyric acid receptor subunit beta-like (496 aa).

The segment at residues 1–20 (MTCFTRVGVSCGLFFFLLGA) is a signal peptide (or 27). Residues 21–258 (QLQLIRCIRK…SFKLQRNIGY (238 aa)) lie on the Extracellular side of the membrane. N-linked (GlcNAc...) asparagine glycosylation is found at asparagine 39 and asparagine 189. A disulfide bridge connects residues cysteine 176 and cysteine 190. The next 3 helical transmembrane spans lie at 259–280 (FVFQ…SFWI), 285–306 (TSAR…STGV), and 318–342 (AIDI…AVNY). The Cytoplasmic segment spans residues 343 to 472 (TYWGKRAKKK…KIKDVNIIDK (130 aa)). The helical transmembrane segment at 473–494 (YSRMIFPISFLAFNLGYWLFYI) threads the bilayer.

This sequence belongs to the ligand-gated ion channel (TC 1.A.9) family. Gamma-aminobutyric acid receptor (TC 1.A.9.5) subfamily. As to quaternary structure, generally pentameric. There are five types of GABA(A) receptor chains: alpha, beta, gamma, delta, and rho. Interacts with Grd (alpha chain).

It is found in the postsynaptic cell membrane. It localises to the cell membrane. Functionally, GABA, an inhibitory neurotransmitter, mediates neuronal inhibition by binding to the GABA receptor and opening an integral chloride channel. Combines with the ligand-gated ion channel subunit GRD to form cation-selective GABA-gated ion channels when coexpressed in Xenopus laevis oocytes. This chain is Gamma-aminobutyric acid receptor subunit beta-like (Lcch3), found in Drosophila melanogaster (Fruit fly).